Here is a 311-residue protein sequence, read N- to C-terminus: Acetyl-coenzyme A carboxylase carboxyl transferase subunit alpha (311 aa).

The CoA carboxyltransferase C-terminal domain maps to 36–286 (NLSKEISKVY…ANYFISELAE (251 aa)).

It belongs to the AccA family. As to quaternary structure, acetyl-CoA carboxylase is a heterohexamer composed of biotin carboxyl carrier protein (AccB), biotin carboxylase (AccC) and two subunits each of ACCase subunit alpha (AccA) and ACCase subunit beta (AccD).

The protein resides in the cytoplasm. It carries out the reaction N(6)-carboxybiotinyl-L-lysyl-[protein] + acetyl-CoA = N(6)-biotinyl-L-lysyl-[protein] + malonyl-CoA. It functions in the pathway lipid metabolism; malonyl-CoA biosynthesis; malonyl-CoA from acetyl-CoA: step 1/1. Its function is as follows. Component of the acetyl coenzyme A carboxylase (ACC) complex. First, biotin carboxylase catalyzes the carboxylation of biotin on its carrier protein (BCCP) and then the CO(2) group is transferred by the carboxyltransferase to acetyl-CoA to form malonyl-CoA. The protein is Acetyl-coenzyme A carboxylase carboxyl transferase subunit alpha of Campylobacter concisus (strain 13826).